A 152-amino-acid polypeptide reads, in one-letter code: Large ribosomal subunit protein uL15 (152 aa).

Residues 1–57 (MTSTLNTLKSNSGSRKKKLRKGRGIAAGQGASCGFGMRGQKSRSGRPTRPGFEGGQM) are disordered. Over residues 14 to 23 (SRKKKLRKGR) the composition is skewed to basic residues. A compositionally biased stretch (gly residues) spans 25 to 37 (IAAGQGASCGFGM).

This sequence belongs to the universal ribosomal protein uL15 family. In terms of assembly, part of the 50S ribosomal subunit.

In terms of biological role, binds to the 23S rRNA. The chain is Large ribosomal subunit protein uL15 from Prochlorococcus marinus (strain MIT 9312).